A 761-amino-acid chain; its full sequence is Elongation factor G, mitochondrial (761 aa).

Residues 1 to 42 (MSVQKMMRVPRKMVGGRIPFFTCSKVFSGFSRRSFHESPLAR) constitute a mitochondrion transit peptide. A tr-type G domain is found at 68–349 (NKLRNIGISA…AIVDYLPNPS (282 aa)). GTP-binding positions include 77-84 (AHIDSGKT), 148-152 (DTPGH), and 202-205 (NKMD).

It belongs to the TRAFAC class translation factor GTPase superfamily. Classic translation factor GTPase family. EF-G/EF-2 subfamily. In terms of processing, the precursor is processed in two steps involving mitochondrial intermediate peptidase (MIP) and mitochondrial processing peptidase (MPP).

It localises to the mitochondrion. It functions in the pathway protein biosynthesis; polypeptide chain elongation. Functionally, mitochondrial GTPase that catalyzes the GTP-dependent ribosomal translocation step during translation elongation. During this step, the ribosome changes from the pre-translocational (PRE) to the post-translocational (POST) state as the newly formed A-site-bound peptidyl-tRNA and P-site-bound deacylated tRNA move to the P and E sites, respectively. Catalyzes the coordinated movement of the two tRNA molecules, the mRNA and conformational changes in the ribosome. The protein is Elongation factor G, mitochondrial of Saccharomyces cerevisiae (strain YJM789) (Baker's yeast).